Here is a 284-residue protein sequence, read N- to C-terminus: MEMO1 family protein M1425_2054 (284 aa).

This sequence belongs to the MEMO1 family.

The chain is MEMO1 family protein M1425_2054 from Saccharolobus islandicus (strain M.14.25 / Kamchatka #1) (Sulfolobus islandicus).